We begin with the raw amino-acid sequence, 146 residues long: Hemoglobin subunit beta-1 (146 aa).

One can recognise a Globin domain in the interval 2–146 (HWTAEEKALI…VAHALARRYH (145 aa)). H92 provides a ligand contact to heme b.

The protein belongs to the globin family. In terms of assembly, heterotetramer of two alpha chains and two beta chains. Red blood cells.

Functionally, involved in oxygen transport from the lung to the various peripheral tissues. This chain is Hemoglobin subunit beta-1, found in Saara hardwickii (Indian spiny-tailed lizard).